A 130-amino-acid polypeptide reads, in one-letter code: Small ribosomal subunit protein uS9 (130 aa).

It belongs to the universal ribosomal protein uS9 family.

The polypeptide is Small ribosomal subunit protein uS9 (Shewanella denitrificans (strain OS217 / ATCC BAA-1090 / DSM 15013)).